Consider the following 307-residue polypeptide: Putative oxidoreductase YceM (307 aa).

This sequence belongs to the Gfo/Idh/MocA family.

The chain is Putative oxidoreductase YceM (yceM) from Salmonella typhimurium (strain LT2 / SGSC1412 / ATCC 700720).